A 140-amino-acid polypeptide reads, in one-letter code: Cystatin-like 1 (140 aa).

The N-terminal stretch at 1-23 (MEMKARGLRIPLLLLLVTVVVMA) is a signal peptide. In terms of domain architecture, Cystatin spans 32–126 (GGFKEKAMSK…CKSLIYSVPW (95 aa)). An N-linked (GlcNAc...) asparagine glycan is attached at asparagine 45. Disulfide bonds link cysteine 94–cysteine 104 and cysteine 117–cysteine 137.

The protein belongs to the cystatin family. Highly expressed in testis where it localizes to spermatogonium, spermatocyes and round spermatids. Not detected in spermatozoa. Also detected in epididymis, cerebrum and pituitary.

The protein localises to the secreted. In Mus musculus (Mouse), this protein is Cystatin-like 1.